The chain runs to 355 residues: MNKSLFSLILLIITIFNLASNINIVSAISNFNINNNNKNNNDNKEIRFPTDIIIDDSTEINFNNHEDNNNNNNNNNNNNNAYNEDSGNSVQLGDIECVVCLDFLDSYLPTLVKIISEYGVIESCSKICGLLNKTDEIDICTGLCDLVGVDTFWKIFVTNDINPFYACELITACSTPKNPAADFISLGVSPAIGQSGSKFLIDLTFQVVNTTGAGQFAFIVFYTQTQSKFINYQLFEGFSPGNYSVKYDFETTNNSTFINGQYPVTVYMCNGECGTMYSTLLNQTTSYFTISNPTPTPTPTPSNSTTPTPTPTNSTPTPTSTSTPTSTPTSTPTPTPTSSSSTKTHSSHYKNKINK.

Residues 1 to 27 (MNKSLFSLILLIITIFNLASNINIVSA) form the signal peptide. The interval 63–83 (NNHEDNNNNNNNNNNNNNAYN) is disordered. The span at 69–83 (NNNNNNNNNNNNAYN) shows a compositional bias: low complexity. The Saposin B-type domain maps to 93–177 (GDIECVVCLD…ELITACSTPK (85 aa)). 3 disulfide bridges follow: Cys-97-Cys-173, Cys-100-Cys-167, and Cys-128-Cys-140. N-linked (GlcNAc...) asparagine glycans are attached at residues Asn-132, Asn-209, Asn-242, Asn-253, Asn-254, Asn-282, and Asn-303. The segment at 290-355 (ISNPTPTPTP…SSHYKNKINK (66 aa)) is disordered. Residues 301–342 (PSNSTTPTPTPTNSTPTPTSTSTPTSTPTSTPTPTPTSSSST) show a composition bias toward low complexity. Basic residues predominate over residues 345–355 (HSSHYKNKINK).

It belongs to the countin family.

Its subcellular location is the secreted. In Dictyostelium discoideum (Social amoeba), this protein is Countin-like protein.